The sequence spans 849 residues: Membrane protein-large ribosomal subunit bL9 fusion protein (849 aa).

Positions 1–680 (MFSKNKHNTK…TQLEGTNIKT (680 aa)) are unknown. Helical transmembrane passes span 11–31 (FIVI…LDFQ) and 64–84 (IIFF…VISF). One can recognise a GGDEF domain in the interval 214–342 (KTLALAMITF…GGDQVVVNIE (129 aa)). The interval 681 to 849 (VTDTLKHFLK…FLNVTERKSK (169 aa)) is large ribosomal subunit protein bL9.

The protein belongs to the bacterial ribosomal protein bL9 family.

Its subcellular location is the cell membrane. Functionally, binds to the 23S rRNA. This is Membrane protein-large ribosomal subunit bL9 fusion protein from Onion yellows phytoplasma (strain OY-M).